Here is a 296-residue protein sequence, read N- to C-terminus: Small ribosomal subunit protein uS2 (296 aa).

Disordered regions lie at residues 1-24 (MNTKKEEVVSSPEATVEKKQTQSQ) and 270-296 (HELKKSEEASEVKAASTKEKLTEEASQ).

It belongs to the universal ribosomal protein uS2 family.

This is Small ribosomal subunit protein uS2 from Mycoplasmopsis synoviae (strain 53) (Mycoplasma synoviae).